Reading from the N-terminus, the 64-residue chain is MSTKNRTRRTTTRNIRFPNQMIEQINIALEQKGSGNFSAWVIEACRRRLTSEKRAYTSIKSDEE.

This is an uncharacterized protein from Escherichia coli (strain K12).